Here is a 386-residue protein sequence, read N- to C-terminus: MAENSLSDGGPADSVEAAKNASNTEKLTDQVMQNPQVLAALQERLDNVSHTPSSYIETLPKAVKRRINALKQLQVRCAHIEAKFYEEVHDLERKYAALYQPLFDKRREFITGDVEPTDAESAWHSENEEDDKLAGDMKNKVVIAEKEAAAVEELNPKGIPEFWFTIFRNVDMLSELVQEYDEPILKHLQDIKVKFSDPGQPMSFVLEFHFEPNDYFTNPVLTKTYKMKSEPDKADPFSFEGPEIVDCDGCTIDWKKGKNVTVKTIKKKQKHKGRGTVRTITKQVPNESFFNFFSPLKASGDGESLDEDSEFTLASDFEIGHFFRERIVPRAVLYFTGEAIEDDDNFEEGEEGEEEELEGDEEGEDEDDADVNPKKEPIQPAECKQQ.

Residues 1-28 are disordered; it reads MAENSLSDGGPADSVEAAKNASNTEKLT. The residue at position 2 (A2) is an N-acetylalanine. S5, S7, and S49 each carry phosphoserine. T51 carries the post-translational modification Phosphothreonine. Residues S53 and S54 each carry the phosphoserine modification. T58 is subject to Phosphothreonine. The residue at position 105 (K105) is an N6-acetyllysine. S125 bears the Phosphoserine mark. N6-acetyllysine is present on K146. A Nuclear localization signal motif is present at residues 265-271; the sequence is IKKKQKH. Phosphoserine is present on S304. The span at 339–370 shows a compositional bias: acidic residues; sequence AIEDDDNFEEGEEGEEEELEGDEEGEDEDDAD. The disordered stretch occupies residues 339–386; sequence AIEDDDNFEEGEEGEEEELEGDEEGEDEDDADVNPKKEPIQPAECKQQ.

It belongs to the nucleosome assembly protein (NAP) family. As to quaternary structure, interacts with core (H2A, H2B, H3, H4) and linker (H1) histones. Post-translationally, polyglutamylated and polyglycylated. These 2 modifications occur exclusively on glutamate residues and result in either polyglutamate or polyglycine chains on the gamma-carboxyl group. Both modifications can coexist on the same protein on adjacent residues, and lowering polyglycylation levels increases polyglutamylation, and reciprocally. Polyglutamylated by TTLL4. In terms of processing, phosphorylated at the G0/G1 boundary but it is not phosphorylated in S-phase. Phosphorylated protein remains in the cytoplasm in a complex with histones during the G0/G1 transition, whereas dephosphorylation triggers its transport into the nucleus at the G1/S-boundary.

The protein resides in the nucleus. It localises to the cytoplasm. Functionally, acts as a histone chaperone in nucleosome assembly. This Rattus norvegicus (Rat) protein is Nucleosome assembly protein 1-like 4 (Nap1l4).